The following is a 434-amino-acid chain: Trigger factor (434 aa).

The 86-residue stretch at 161-246 (EDRATLDFTG…LKKVEVRELP (86 aa)) folds into the PPIase FKBP-type domain.

This sequence belongs to the FKBP-type PPIase family. Tig subfamily.

It is found in the cytoplasm. It catalyses the reaction [protein]-peptidylproline (omega=180) = [protein]-peptidylproline (omega=0). Its function is as follows. Involved in protein export. Acts as a chaperone by maintaining the newly synthesized protein in an open conformation. Functions as a peptidyl-prolyl cis-trans isomerase. In Yersinia pseudotuberculosis serotype O:1b (strain IP 31758), this protein is Trigger factor.